Here is a 163-residue protein sequence, read N- to C-terminus: Peptide deformylase 3 (163 aa).

Residues Cys91 and His133 each coordinate Fe cation. Residue Glu134 is part of the active site. His137 contacts Fe cation.

It belongs to the polypeptide deformylase family. It depends on Fe(2+) as a cofactor.

The catalysed reaction is N-terminal N-formyl-L-methionyl-[peptide] + H2O = N-terminal L-methionyl-[peptide] + formate. Removes the formyl group from the N-terminal Met of newly synthesized proteins. Requires at least a dipeptide for an efficient rate of reaction. N-terminal L-methionine is a prerequisite for activity but the enzyme has broad specificity at other positions. In Shewanella oneidensis (strain ATCC 700550 / JCM 31522 / CIP 106686 / LMG 19005 / NCIMB 14063 / MR-1), this protein is Peptide deformylase 3.